The primary structure comprises 421 residues: Bestrophin homolog 2 (421 aa).

4 consecutive transmembrane segments (helical) span residues 28–48 (IWKA…IISV), 73–93 (LSFI…VDRW), 239–259 (LMYP…SIIA), and 275–295 (VYFP…LKVI).

Belongs to the anion channel-forming bestrophin (TC 1.A.46) family. Calcium-sensitive chloride channel subfamily. In terms of assembly, forms oligomers.

It is found in the cell membrane. Its function is as follows. Forms chloride channels. The protein is Bestrophin homolog 2 (best-2) of Caenorhabditis elegans.